The primary structure comprises 342 residues: RNA 3'-terminal phosphate cyclase (342 aa).

ATP-binding positions include glutamine 103 and 283–287; that span reads YLADQ. Catalysis depends on histidine 308, which acts as the Tele-AMP-histidine intermediate.

It belongs to the RNA 3'-terminal cyclase family. Type 1 subfamily.

It localises to the cytoplasm. The catalysed reaction is a 3'-end 3'-phospho-ribonucleotide-RNA + ATP = a 3'-end 2',3'-cyclophospho-ribonucleotide-RNA + AMP + diphosphate. Its function is as follows. Catalyzes the conversion of 3'-phosphate to a 2',3'-cyclic phosphodiester at the end of RNA. The mechanism of action of the enzyme occurs in 3 steps: (A) adenylation of the enzyme by ATP; (B) transfer of adenylate to an RNA-N3'P to produce RNA-N3'PP5'A; (C) and attack of the adjacent 2'-hydroxyl on the 3'-phosphorus in the diester linkage to produce the cyclic end product. The biological role of this enzyme is unknown but it is likely to function in some aspects of cellular RNA processing. The protein is RNA 3'-terminal phosphate cyclase of Shigella dysenteriae serotype 1 (strain Sd197).